A 490-amino-acid polypeptide reads, in one-letter code: MMMMIILLWSIIFMTILFLKKQLSGKKGKTPPSPPGLPLIGNLHQLGRHTHRSLCDLSRRYGPLMLLHLGRVPVLIVSSADMAQEILKTHDQAFANRPRSKLSQKLLYNNRDVASAPYGEYWRQMKSVCVIHLLSNKMVRSFRDVREEEITLMMAKIRKSSSLPFNVSKVLECLTNDVICRVALGRKYGGETDFKKLTDRLSELLGTFSIGSFVPWLAWVDWIRGWDAQLDKMGKDLDDFFEKVVQDHEDGDRRDGTDLIDALLRVKREKSPGFEIERVSIKAITLDVFVGGSDTSFTLLEWAMTELLRHPKSLNRLQEEVRTICKGKSRVSEDDIQGMKYLKAVIKEALRLHPPFPMMAPHESTEDVKLRDYHIPAGTQVMMNAWAIGREVATWGPDAEEFKPERHLDTSVDFRGQNFELLPFGAGRRICPAVSFAVVLNEVVLANLVHGFDWKLPEESKEDKTDVAESSGFSVHREFPLYAVASPYLT.

The chain crosses the membrane as a helical span at residues 1-21; it reads MMMMIILLWSIIFMTILFLKK. Heme is bound at residue Cys431.

It belongs to the cytochrome P450 family. The cofactor is heme.

The protein localises to the membrane. The sequence is that of Cytochrome P450 71A25 (CYP71A25) from Arabidopsis thaliana (Mouse-ear cress).